Reading from the N-terminus, the 1405-residue chain is Protein translocase subunit SecA (1405 aa).

The protein translocase subunit SecA stretch occupies residues 1–1099 (MHMKIKKFKK…SDYKKLNEDE (1099 aa)). ATP is bound by residues Gln-88, 106–110 (GEGKS), and Asp-494. The segment at 1100–1405 (SDDDIKAFYK…LDYLKENNKK (306 aa)) is unknown.

Belongs to the SecA family. In terms of assembly, monomer and homodimer. Part of the essential Sec protein translocation apparatus which comprises SecA, SecYEG and auxiliary proteins SecDF. Other proteins may also be involved.

The protein resides in the cell membrane. It localises to the cytoplasm. The catalysed reaction is ATP + H2O + cellular proteinSide 1 = ADP + phosphate + cellular proteinSide 2.. Its function is as follows. Part of the Sec protein translocase complex. Interacts with the SecYEG preprotein conducting channel. Has a central role in coupling the hydrolysis of ATP to the transfer of proteins into and across the cell membrane, serving as an ATP-driven molecular motor driving the stepwise translocation of polypeptide chains across the membrane. The chain is Protein translocase subunit SecA from Malacoplasma penetrans (strain HF-2) (Mycoplasma penetrans).